Consider the following 738-residue polypeptide: Exocyst complex component 3 (738 aa).

The stretch at 28–91 forms a coiled coil; sequence LEKVEQYRHR…DEVERLLRGV (64 aa).

The protein belongs to the SEC6 family. The exocyst complex is composed of Sec3/Exoc1, Sec5/Exoc2, Sec6/Exoc3, Sec8/Exoc4, Sec10/Exoc5, Sec15/Exoc6, Exo70/Exoc7 and Exo84/Exoc8.

In terms of biological role, component of the exocyst complex involved in the docking of exocytic vesicles with fusion sites on the plasma membrane. The protein is Exocyst complex component 3 of Drosophila melanogaster (Fruit fly).